Reading from the N-terminus, the 369-residue chain is tRNA-specific 2-thiouridylase MnmA (369 aa).

Residues 11–18 (GMSGGVDS) and M37 contribute to the ATP site. Residues 97-99 (NPD) are interaction with target base in tRNA. Catalysis depends on C102, which acts as the Nucleophile. An intrachain disulfide couples C102 to C199. G127 contacts ATP. Residues 149-151 (KDQ) form an interaction with tRNA region. C199 functions as the Cysteine persulfide intermediate in the catalytic mechanism. Residues 311–312 (RY) are interaction with tRNA.

It belongs to the MnmA/TRMU family. As to quaternary structure, interacts with TusE.

The protein resides in the cytoplasm. It carries out the reaction S-sulfanyl-L-cysteinyl-[protein] + uridine(34) in tRNA + AH2 + ATP = 2-thiouridine(34) in tRNA + L-cysteinyl-[protein] + A + AMP + diphosphate + H(+). Catalyzes the 2-thiolation of uridine at the wobble position (U34) of tRNA(Lys), tRNA(Glu) and tRNA(Gln), leading to the formation of s(2)U34, the first step of tRNA-mnm(5)s(2)U34 synthesis. Sulfur is provided by IscS, via a sulfur-relay system. Binds ATP and its substrate tRNAs. The chain is tRNA-specific 2-thiouridylase MnmA from Enterobacter sp. (strain 638).